The following is a 208-amino-acid chain: Small ribosomal subunit protein uS2 (208 aa).

Belongs to the universal ribosomal protein uS2 family.

This is Small ribosomal subunit protein uS2 from Cenarchaeum symbiosum (strain A).